Reading from the N-terminus, the 826-residue chain is Golgin subfamily A member 6-like protein 25 (826 aa).

Disordered regions lie at residues 1–100, 297–327, 345–425, 502–534, 547–646, and 658–826; these read MWPQ…HQEA, QEQEEKIREQEEKMRRQEEMMWEKEEKMRRQ, MHEQ…EMWR, QEEMWREEEKMHEQEKIWEEEKRQEQEDKMWRQ, RQEE…EQEE, and QEEM…MQEH. Residues 31-52 are compositionally biased toward basic and acidic residues; that stretch reads MSKETRQSKLAEAKEQLTDHHP. Composition is skewed to polar residues over residues 53 to 63 and 71 to 83; these read QTNPSVGTAAS and NNGTNPETTTSGG. Residues 86–100 are compositionally biased toward basic and acidic residues; sequence SPEDEQKASHQHQEA. Residues 157–822 are a coiled coil; sequence LEQALSAVAT…EVRLRQQEEK (666 aa). Basic and acidic residues-rich tracts occupy residues 658 to 678 and 686 to 826; these read QEEMMQEQEEKMGEQEEKMWE and QEEK…MQEH.

This sequence belongs to the GOLGA6 family.

This chain is Golgin subfamily A member 6-like protein 25, found in Homo sapiens (Human).